Consider the following 179-residue polypeptide: Large ribosomal subunit protein uL5 (179 aa).

The protein belongs to the universal ribosomal protein uL5 family. In terms of assembly, part of the 50S ribosomal subunit; part of the 5S rRNA/L5/L18/L25 subcomplex. Contacts the 5S rRNA and the P site tRNA. Forms a bridge to the 30S subunit in the 70S ribosome.

Functionally, this is one of the proteins that bind and probably mediate the attachment of the 5S RNA into the large ribosomal subunit, where it forms part of the central protuberance. In the 70S ribosome it contacts protein S13 of the 30S subunit (bridge B1b), connecting the 2 subunits; this bridge is implicated in subunit movement. Contacts the P site tRNA; the 5S rRNA and some of its associated proteins might help stabilize positioning of ribosome-bound tRNAs. In Buchnera aphidicola subsp. Acyrthosiphon kondoi (Acyrthosiphon kondoi symbiotic bacterium), this protein is Large ribosomal subunit protein uL5.